Here is a 335-residue protein sequence, read N- to C-terminus: Syntaxin-18 (335 aa).

Residues 1–309 are Cytoplasmic-facing; that stretch reads MAVDITLLFR…EDIREAIKNN (309 aa). 2 stretches are compositionally biased toward basic and acidic residues: residues 168 to 182 and 192 to 208; these read KLEP…ESTS and KDSE…EKIL. A disordered region spans residues 168–226; the sequence is KLEPEPNTKTRESTSSEKVSQSPSKDSEENPATEERPEKILAETQPELGTWGDGKGEDE. The 63-residue stretch at 243–305 folds into the t-SNARE coiled-coil homology domain; the sequence is IGEMNSLFDE…KEGNEDIREA (63 aa). Residues 310–330 traverse the membrane as a helical; Anchor for type IV membrane protein segment; it reads AGFRVWILFFLVMCSFSLLFL. The Vesicular portion of the chain corresponds to 331 to 335; it reads DWYDS.

The protein belongs to the syntaxin family. As to quaternary structure, component of a SNARE complex consisting of STX18, USE1L, BNIP1/SEC20L, and SEC22B. RINT1/TIP20L and ZW10 are associated with the complex through interaction with BNIP1/SEC20L. Interacts directly with USE1L and BNIP1/SEC20L. As to expression, ubiquitous.

It localises to the endoplasmic reticulum membrane. Its subcellular location is the golgi apparatus membrane. In terms of biological role, syntaxin that may be involved in targeting and fusion of Golgi-derived retrograde transport vesicles with the ER. In Homo sapiens (Human), this protein is Syntaxin-18 (STX18).